An 894-amino-acid polypeptide reads, in one-letter code: Low-affinity phosphate transporter PHO91 (894 aa).

In terms of domain architecture, SPX spans 1 to 256; it reads MKFSHSLQFN…NTNLKQNYLN (256 aa). 2 disordered regions span residues 124-160 and 293-321; these read QHQLQSVARNRKSKSQQRQRRFSSVSSTDSNPSLTDM and RPSNTFNLDADRINNDENSSGNEEDEDGN. The segment covering 132–144 has biased composition (basic residues); it reads RNRKSKSQQRQRR. Residues 151–160 are compositionally biased toward polar residues; it reads TDSNPSLTDM. Residues Ser295, Ser311, and Ser312 each carry the phosphoserine modification. A run of 13 helical transmembrane segments spans residues 430–450, 474–494, 511–531, 557–577, 602–622, 642–662, 682–702, 706–726, 738–758, 777–797, 799–819, 824–844, and 874–894; these read LKFLLITSCFIALLTFNLTPF, TIPLFVTSLMIPLLIVVFPVI, FILSTMWSSVIMLLLGGFTLA, FILLTNMFVALFVSMWVSNVA, ALILGIALASNIGGMSSPIAS, FMIALPVCFICVMAIWVLLII, FTLKQWFVTLVCIITIVLWCL, ISGIFGEMGIISIIPIVVFFG, FMWTIVVLAMGGTTLGKAVSS, PIFIIVLIFGLVILVMATFVS, TVAAMIIVPLMSEIGSNLPSG, LLIVIAALLCSSAMGLPTSGF, and SLLSYAAIVTVGYGILKVMGF.

This sequence belongs to the CitM (TC 2.A.11) transporter family. Ubiquitinated by RSP5. RSP5-mediated ubiquitination initiates internalization and degradation by the endocytic pathway.

Its subcellular location is the vacuole membrane. In terms of biological role, vacuolar phosphate transporter that probably exports phosphate from the vacuolar lumen to the cytosol. This Saccharomyces cerevisiae (strain ATCC 204508 / S288c) (Baker's yeast) protein is Low-affinity phosphate transporter PHO91 (PHO91).